The primary structure comprises 250 residues: Triosephosphate isomerase (250 aa).

9–11 (NWK) lines the substrate pocket. The active-site Electrophile is His96. Glu166 functions as the Proton acceptor in the catalytic mechanism. Substrate contacts are provided by residues Gly172, Ser212, and 233 to 234 (GG).

This sequence belongs to the triosephosphate isomerase family. In terms of assembly, homodimer.

It is found in the cytoplasm. The catalysed reaction is D-glyceraldehyde 3-phosphate = dihydroxyacetone phosphate. It participates in carbohydrate biosynthesis; gluconeogenesis. It functions in the pathway carbohydrate degradation; glycolysis; D-glyceraldehyde 3-phosphate from glycerone phosphate: step 1/1. Its function is as follows. Involved in the gluconeogenesis. Catalyzes stereospecifically the conversion of dihydroxyacetone phosphate (DHAP) to D-glyceraldehyde-3-phosphate (G3P). The sequence is that of Triosephosphate isomerase from Chlorobium luteolum (strain DSM 273 / BCRC 81028 / 2530) (Pelodictyon luteolum).